Reading from the N-terminus, the 305-residue chain is CRISPR-associated endonuclease Cas1 (305 aa).

Residues S96–Q278 are sufficient for cleavage of ssRNA, ssDNA and Holliday junction DNA. Mg(2+) contacts are provided by E141, H208, and D221. The interval Q278–S305 is disordered.

This sequence belongs to the CRISPR-associated endonuclease Cas1 family. Homodimer. Part of the Cas1-Cas2 complex. Interacts with RecB, RecC, RuvB, CasC and CasE. Forms a hexamer with 2 Cas1 dimers sandwiching a Cas2 dimer. The DNA lies across a flat surface extending from 1 Cas1 dimer, across the Cas2 dimer and contacting the other Cas1 dimer. Only 1 Cas1 protein from each dimer is catalytic, the other interacts with the Cas2 dimer and possibly target DNA. Mg(2+) is required as a cofactor.

It localises to the cytoplasm. Its activity is regulated as follows. Nuclease activity partially inhibited by CasE. In terms of biological role, CRISPR (clustered regularly interspaced short palindromic repeat), is an adaptive immune system that provides protection against mobile genetic elements (viruses, transposable elements and conjugative plasmids). CRISPR clusters contain sequences complementary to antecedent mobile elements and target invading nucleic acids. CRISPR clusters are transcribed and processed into CRISPR RNA (crRNA). The Cas1-Cas2 complex is involved in CRISPR adaptation, the first stage of CRISPR immunity, being required for the addition/removal of CRISPR spacers at the leader end of the CRISPR locus. The Cas1-Cas2 complex introduces staggered nicks into both strands of the CRISPR array near the leader repeat and joins the 5'-ends of the repeat strands with the 3'-ends of the new spacer sequence. Spacer DNA integration requires supercoiled target DNA and 3'-OH ends on the inserted (spacer) DNA and probably initiates with a nucleophilic attack of the C 3'-OH end of the protospacer on the minus strand of the first repeat sequence. Expression of Cas1-Cas2 in a strain lacking both genes permits spacer acquisition. Non-specifically binds DNA; the Cas1-Cas2 complex preferentially binds CRISPR-locus DNA. Highest binding is seen to a dual forked DNA complex with 3'-overhangs and a protospacer-adjacent motif-complement specifically positioned. The protospacer DNA lies across a flat surface extending from 1 Cas1 dimer, across the Cas2 dimer and contacting the other Cas1 dimer; the 23 bp-long ds section of the DNA is bracketed by 1 Tyr-22 from each of the Cas1 dimers. Cas1 cuts within the 3'-overhang, to generate a 33-nucleotide DNA that is probably incorporated into the CRISPR leader by a cut-and-paste mechanism. Cas1 alone endonucleolytically cleaves linear ssRNA, ssDNA and short (34 base) dsDNA as well as branched DNA substrates such as Holliday junctions, replication forks and 5'-flap DNA substrates. In vitro catalyzes a concerted transesterification reaction on branched DNA, as would be expected during integration of protospacers into the CRISPR leader sequence; Cas2 is not required in vitro. This reaction requires a 3'-OH group at the branch point. Genetic interactions suggest Cas1 interacts with components of the RecBC and RuvB DNA repair systems. The polypeptide is CRISPR-associated endonuclease Cas1 (ygbT) (Escherichia coli (strain K12)).